Here is a 671-residue protein sequence, read N- to C-terminus: Putative ubiquitin thioesterase 232R (671 aa).

4 disordered regions span residues 36–62, 100–123, 171–203, and 250–319; these read EIIDYQKNNPPRRSPSPRRSPSPRRIS, SPKIPSPVRQPSPVHSPVRSPVRQ, NQKPPRRSPSPRRSPSPRRSPSPRRSPSPRPVF, and EPIR…SKRS. Over residues 110 to 123 the composition is skewed to low complexity; sequence PSPVHSPVRSPVRQ. A compositionally biased stretch (pro residues) spans 182 to 200; the sequence is RRSPSPRRSPSPRRSPSPR. A compositionally biased stretch (low complexity) spans 255-271; that stretch reads SSSSRSSRSTRRSSSTK. The span at 272–319 shows a compositional bias: basic residues; the sequence is PSRRSSSRSRRSSSRSRRSSSRSRRSSSRSRRSSRRSTSRSRSLSKRS. Positions 392 to 521 constitute an OTU domain; sequence FRMINVPLDG…NFHYIALEPF (130 aa). Aspartate 400 is a catalytic residue. Catalysis depends on cysteine 403, which acts as the Nucleophile. Residue histidine 514 is part of the active site. Positions 589–625 are disordered; it reads KRSLRPSIPPKISTEHRRTPKLRPSVPRPSSIRQSQP.

The catalysed reaction is Thiol-dependent hydrolysis of ester, thioester, amide, peptide and isopeptide bonds formed by the C-terminal Gly of ubiquitin (a 76-residue protein attached to proteins as an intracellular targeting signal).. Its function is as follows. Hydrolase that can remove conjugated ubiquitin from proteins and may therefore play an important regulatory role at the level of protein turnover by preventing degradation. The sequence is that of Putative ubiquitin thioesterase 232R from Acheta domesticus (House cricket).